Consider the following 76-residue polypeptide: Exodeoxyribonuclease 7 small subunit (76 aa).

Belongs to the XseB family. Heterooligomer composed of large and small subunits.

The protein localises to the cytoplasm. It catalyses the reaction Exonucleolytic cleavage in either 5'- to 3'- or 3'- to 5'-direction to yield nucleoside 5'-phosphates.. Functionally, bidirectionally degrades single-stranded DNA into large acid-insoluble oligonucleotides, which are then degraded further into small acid-soluble oligonucleotides. This Gluconacetobacter diazotrophicus (strain ATCC 49037 / DSM 5601 / CCUG 37298 / CIP 103539 / LMG 7603 / PAl5) protein is Exodeoxyribonuclease 7 small subunit.